The following is a 332-amino-acid chain: Tetraacyldisaccharide 4'-kinase (332 aa).

An ATP-binding site is contributed by 53-60; it reads SVGGNGKT.

This sequence belongs to the LpxK family.

The catalysed reaction is a lipid A disaccharide + ATP = a lipid IVA + ADP + H(+). It functions in the pathway glycolipid biosynthesis; lipid IV(A) biosynthesis; lipid IV(A) from (3R)-3-hydroxytetradecanoyl-[acyl-carrier-protein] and UDP-N-acetyl-alpha-D-glucosamine: step 6/6. Transfers the gamma-phosphate of ATP to the 4'-position of a tetraacyldisaccharide 1-phosphate intermediate (termed DS-1-P) to form tetraacyldisaccharide 1,4'-bis-phosphate (lipid IVA). This chain is Tetraacyldisaccharide 4'-kinase, found in Haemophilus influenzae (strain 86-028NP).